Reading from the N-terminus, the 249-residue chain is 3alpha-hydroxy bile acid-CoA-ester 3-dehydrogenase 1/3 (249 aa).

NAD(+)-binding positions include 15–18 (TRGI), Glu38, Glu42, and Asn92. Substrate is bound at residue Ser144. Active-site proton donor/acceptor residues include Tyr157 and Lys161. Residues Lys161 and 190-192 (VDT) contribute to the NAD(+) site.

Belongs to the short-chain dehydrogenases/reductases (SDR) family. Homotetramer.

The catalysed reaction is a 3alpha-hydroxy bile acid CoA + NAD(+) = a 3-oxo bile acid CoA + NADH + H(+). The enzyme catalyses choloyl-CoA + NAD(+) = 7alpha,12alpha-dihydroxy-3-oxochol-24-oyl-CoA + NADH + H(+). It carries out the reaction chenodeoxycholoyl-CoA + NAD(+) = 7alpha-hydroxy-3-oxochol-24-oyl-CoA + NADH + H(+). It catalyses the reaction deoxycholoyl-CoA + NAD(+) = 12alpha-hydroxy-3-oxocholan-24-oyl-CoA + NADH + H(+). The catalysed reaction is lithocholoyl-CoA + NAD(+) = 3-oxocholan-24-oyl-CoA + NADH + H(+). It functions in the pathway lipid metabolism; bile acid biosynthesis. Involved in the multi-step bile acid 7alpha-dehydroxylation pathway that transforms primary bile acids to secondary bile acids in the human gut. Catalyzes the oxidation of C3-hydroxyl group of CoA conjugated bile acids generating a C3-oxo bile acid intermediate. Can use choloyl-CoA, chenodeoxycholoyl-CoA, deoxycholoyl-CoA, and lithocholoyl-CoA as substrates with similar efficiency. Highly prefers NAD over NADP as cosubstrate. Also catalyzes the reverse reactions; in vitro, the preferred direction of reaction depends on the pH. Has very little activity with unconjugated (non-CoA) bile acid substrates. This chain is 3alpha-hydroxy bile acid-CoA-ester 3-dehydrogenase 1/3 (baiA1), found in Clostridium scindens (strain JCM 10418 / VPI 12708).